Here is a 170-residue protein sequence, read N- to C-terminus: IMPACT family member YDL177C (170 aa).

A disordered region spans residues 79 to 98 (KKKGNKANKSNNSHVNKSRN).

Belongs to the IMPACT family.

The sequence is that of IMPACT family member YDL177C from Saccharomyces cerevisiae (strain ATCC 204508 / S288c) (Baker's yeast).